Reading from the N-terminus, the 723-residue chain is Bifunctional lysine-specific demethylase and histidyl-hydroxylase NO66 (723 aa).

Disordered stretches follow at residues 13–34 and 48–213; these read KKTA…QKAA and SAVK…APSC. Over residues 14–31 the composition is skewed to basic residues; it reads KTAKKPAKKTTKQNRQKQ. Low complexity predominate over residues 49–72; the sequence is AVKQNNGAKGKAKANGVKGNAKAQ. Composition is skewed to acidic residues over residues 88-106 and 114-129; these read ESVD…EDNE and EDDY…EFEE. Low complexity predominate over residues 133–155; the sequence is NSPSGSCSCSASSGSSNTENSPP. Basic and acidic residues predominate over residues 190–199; the sequence is EQKEGKELSK. A compositionally biased stretch (low complexity) spans 204–213; the sequence is KSAPAAAPSC. A JmjC domain is found at 379-518; that stretch reads NPSTYLKGLR…NLMEALMPAV (140 aa). Positions 419, 421, and 484 each coordinate Fe cation.

The protein belongs to the ROX family. NO66 subfamily. Fe(2+) serves as cofactor.

It is found in the nucleus. The enzyme catalyses N(6),N(6)-dimethyl-L-lysyl(36)-[histone H3] + 2 2-oxoglutarate + 2 O2 = L-lysyl(36)-[histone H3] + 2 formaldehyde + 2 succinate + 2 CO2. In terms of biological role, oxygenase that can act as both a histone lysine demethylase and a ribosomal histidine hydroxylase. Specifically demethylates 'Lys-4' (H3K4me) and 'Lys-36' (H3K36me) of histone H3, thereby playing a central role in histone code. This chain is Bifunctional lysine-specific demethylase and histidyl-hydroxylase NO66, found in Drosophila grimshawi (Hawaiian fruit fly).